A 219-amino-acid polypeptide reads, in one-letter code: UPF0502 protein Swoo_2055 (219 aa).

A disordered region spans residues 167-195 (QVKGESVPISEHSRSQREAPSKRQDEMDE). Over residues 177 to 191 (EHSRSQREAPSKRQD) the composition is skewed to basic and acidic residues.

This sequence belongs to the UPF0502 family.

The protein is UPF0502 protein Swoo_2055 of Shewanella woodyi (strain ATCC 51908 / MS32).